Consider the following 150-residue polypeptide: Transthyretin (150 aa).

The signal sequence occupies residues 1–20 (MASYRLLLLCLAGLVFVSEA). The residue at position 30 (C30) is a Sulfocysteine. K35 contributes to the L-thyroxine binding site. E62 is subject to 4-carboxyglutamate. Residue E74 coordinates L-thyroxine. N118 carries an N-linked (GlcNAc...) asparagine glycan. S137 lines the L-thyroxine pocket.

This sequence belongs to the transthyretin family. As to quaternary structure, homotetramer. Dimer of dimers. In the homotetramer, subunits assemble around a central channel that can accommodate two ligand molecules. Interacts with RBP4. Post-translationally, sulfonation of the reactive cysteine Cys-30 enhances the stability of the native conformation of TTR, avoiding misassembly of the protein leading to amyloid formation. As to expression, detected in plasma and cerebrospinal fluid (at protein level). Highly expressed in the choroid plexus. Detected in liver.

Its subcellular location is the secreted. Functionally, thyroid hormone-binding protein. Probably transports thyroxine from the bloodstream to the brain. The chain is Transthyretin (TTR) from Sus scrofa (Pig).